Consider the following 445-residue polypeptide: GTPase Der (445 aa).

EngA-type G domains lie at 3-167 (PVIA…YAGQ) and 180-353 (IKIA…AAAM). GTP-binding positions include 9–16 (GRPNVGKS), 56–60 (DTGGF), 119–122 (NKAE), 186–193 (GRPNVGKS), 233–237 (DTAGL), and 298–301 (NKWD). A KH-like domain is found at 354–438 (SKLPTPKLTR…PLRIEFRSSN (85 aa)).

The protein belongs to the TRAFAC class TrmE-Era-EngA-EngB-Septin-like GTPase superfamily. EngA (Der) GTPase family. In terms of assembly, associates with the 50S ribosomal subunit.

In terms of biological role, GTPase that plays an essential role in the late steps of ribosome biogenesis. The protein is GTPase Der of Burkholderia cenocepacia (strain ATCC BAA-245 / DSM 16553 / LMG 16656 / NCTC 13227 / J2315 / CF5610) (Burkholderia cepacia (strain J2315)).